An 826-amino-acid polypeptide reads, in one-letter code: Zinc phosphodiesterase ELAC protein 2 (826 aa).

The N-terminal 16 residues, 1 to 16 (MWALCSLLRSAAGRTM), are a transit peptide targeting the mitochondrion. Positions 15-24 (TMSQGRTISQ) are enriched in polar residues. Disordered stretches follow at residues 15–51 (TMSQGRTISQAPARRERPRKDPLRHLRTREKRGPSGC) and 189–231 (QRRG…VSQR). Over residues 27 to 38 (ARRERPRKDPLR) the composition is skewed to basic and acidic residues. A phosphoserine mark is found at S199, S208, S212, S229, S618, and S736. A compositionally biased stretch (basic and acidic residues) spans 208–224 (SPERSSDSESNENEPHL). The segment at 798–826 (ELAGGLEDGEPQQKRAHTEEPQAKKVRAQ) is disordered. The segment covering 808–820 (PQQKRAHTEEPQA) has biased composition (basic and acidic residues).

The protein belongs to the RNase Z family. In terms of assembly, homodimer. Interacts with PTCD1. The cofactor is Zn(2+).

It localises to the mitochondrion. It is found in the mitochondrion matrix. Its subcellular location is the mitochondrion nucleoid. The protein resides in the nucleus. It carries out the reaction Endonucleolytic cleavage of RNA, removing extra 3' nucleotides from tRNA precursor, generating 3' termini of tRNAs. A 3'-hydroxy group is left at the tRNA terminus and a 5'-phosphoryl group is left at the trailer molecule.. Its function is as follows. Zinc phosphodiesterase, which displays mitochondrial tRNA 3'-processing endonuclease activity. Involved in tRNA maturation, by removing a 3'-trailer from precursor tRNA. Associates with mitochondrial DNA complexes at the nucleoids to initiate RNA processing and ribosome assembly. The protein is Zinc phosphodiesterase ELAC protein 2 (ELAC2) of Gorilla gorilla gorilla (Western lowland gorilla).